A 1287-amino-acid polypeptide reads, in one-letter code: MRKTPSHTEKKMVYSIRSLKNGTGSVLIGASLVLLAMATPTISSDESTPTTNEPNNRNTTTLAQPLTDTAAGSGKNESDISSPGNANASLEKTEEKPATEPTTPAASPADPAPQTGQDRSSEPTTSTSPVTTETKAEEPIEDNYFRIHVKKLPEENKDAQGLWTWDDVEKPSENWPNGALSFKDAKKDDYGYYLDVKLKGEQAKKISFLINNTAGKNLTGDKSVEKLVPKMNEAWLDQDYKVFSYEPQPAGTVRVNYYRTDGNYDKKSLWYWGDVKNPSSAQWPDGTDFTATGKYGRYIDIPLNEAAREFGFLLLDESKQGDDVKIRKENYKFTDLKNHSQIFLKDDDESIYTNPYYVHDIRMTGAQHVGTSSIESSFSTLVGAKKEDILKHSNITNHLGNKVTITDVAIDEAGKKVTYSGDFSDTKHPYTVSYNSDQFTTKTSWRLKDETYSYDGKLGADLKEEGKQVDLTLWSPSADKVSVVVYDKNDPDKVVGTVALEKGERGTWKQTLDSTNKLGITDFTGYYYQYQIERQGKTVLALDPYAKSLAAWNSDDAKIDDAHKVAKAAFVDPAKLGPQDLTYGKIHNFKTREDAVIYEAHVRDFTSDPAIAKDLTKPFGTFEAFIEKLDYLKDLGVTHIQLLPVLSYYFVNELKNHEHLSDYASSNSNYNWGYDPQNYFSLTGMYSSDPKNPEKRIAEFKNLINEIHKRGMGAILDVVYNHTAKVDIFEDLEPNYYHFMDADGTPRTSFGGGRLGTTHHMTKRLLVDSIKYLVDTYKVDGFRFDMMGDHDAASIEEAYKAARALNPNLIMLGEGWRTYAGDENMPTKAADQDWMKHTDTVAVFSDDIRNNLKSGYPNEGQPAFITGGKRDVNTIFKNLIAQPTNFEADSPGDVIQYIAAHDNLTLFDIIAQSIKKDPSKAENYAEIHRRLRLGNLMVLTAQGTPFIHSGQEYGRTKQFRNPAYRTPVAEDKVPNKSHLLRDKDGNPFDYPYFIHDSYDSSDAVNKFDWTKATDGKAYPENVKSRDYMKGLIALRQSTDAFRLKSLQDIKDRVHLITVPGQNGVEKEDVVIGYQITAPNGDIYAVFVNADEKAREFNLGTAFAHLRNAEVLADENQAGSVGIANPKGLEWTEKGLKLNALTATVLRVSQNGTSHESTAEEKPDSTPSKPEHQNEASHPAHQDPAPEARPDSTKPDAKVADAENKPSQATADSQAEQPAQEAQASSVKEAVRKESVENSSKENISATPDRQAELPNTGIKNENKLLFAGISLLALLGLGFLLKNKKEN.

Residues 1-44 (MRKTPSHTEKKMVYSIRSLKNGTGSVLIGASLVLLAMATPTISS) form the signal peptide. The segment at 42 to 139 (ISSDESTPTT…VTTETKAEEP (98 aa)) is disordered. Residues 48-61 (TPTTNEPNNRNTTT) are compositionally biased toward low complexity. A compositionally biased stretch (polar residues) spans 79-90 (DISSPGNANASL). Low complexity-rich tracts occupy residues 99–113 (TEPTTPAASPADPAP) and 122–133 (EPTTSTSPVTTE). Residues 163–165 (WTW), Trp-175, Asp-221, 270–272 (WYW), Trp-283, Lys-325, and Asn-330 each bind substrate. Residues Ser-668 and Tyr-670 each contribute to the Ca(2+) site. Residues 674-675 (YD) and Phe-750 contribute to the substrate site. The active-site Nucleophile is the Asp-785. Glu-814 (proton donor) is an active-site residue. Trp-816 contributes to the substrate binding site. Positions 835, 838, and 839 each coordinate Ca(2+). Substrate-binding residues include Asp-846, Arg-849, and Tyr-856. Ca(2+) is bound by residues Asp-889 and Asp-893. Substrate-binding positions include Asn-903, Lys-976, and 996 to 998 (DSY). Asp-999 lines the Ca(2+) pocket. Residues 1147–1255 (VSQNGTSHES…TPDRQAELPN (109 aa)) form a disordered region. The span at 1156-1203 (STAEEKPDSTPSKPEHQNEASHPAHQDPAPEARPDSTKPDAKVADAEN) shows a compositional bias: basic and acidic residues. Low complexity predominate over residues 1212 to 1225 (SQAEQPAQEAQASS). Residues 1228–1239 (EAVRKESVENSS) are compositionally biased toward basic and acidic residues. The LPXTG sorting signal signature appears at 1253-1257 (LPNTG). A Pentaglycyl murein peptidoglycan amidated threonine modification is found at Thr-1256. The propeptide at 1257 to 1287 (GIKNENKLLFAGISLLALLGLGFLLKNKKEN) is removed by sortase.

It belongs to the glycosyl hydrolase 13 family.

It localises to the secreted. Its subcellular location is the cell wall. The protein localises to the cell surface. It carries out the reaction Hydrolysis of (1-&gt;6)-alpha-D-glucosidic linkages in pullulan, amylopectin and glycogen, and in the alpha- and beta-limit dextrins of amylopectin and glycogen.. Inhibited by 4-O-alpha-D-glucopyranosylmoranoline (G1M). Its function is as follows. Virulence factor. Involved in the degradation of glycogen of the mammalian host cells. Hydrolyzes the alpha-1,6-branchpoints of glycogen. Hydrolyzes pullulan. Does not hydrolyze dextran. Binds to mouse lung alveolar type II cells that are rich in glycogen stores. Is an alpha-glucan-specific carbohydrate-binding protein, which binds to amylose (pure alpha-(1,4)-linked glucose), amylopectin (alpha-(1,4)-linked glucose with alpha-(1,6) branch points), pullulan (linear polymer of mixed alpha-(1,4)- and alpha-(1,6)-linked glucose) and glycogen (similar to amylopectin with more frequent alpha-(1,6) branch points) in vitro. Does not bind to dextran (a linear polymer of alpha-(1,6)-linked glucose). The sequence is that of Pullulanase A from Streptococcus pneumoniae.